The primary structure comprises 118 residues: Small ribosomal subunit protein uS13 (118 aa).

The interval 99–118 (GQRTRTNARTRKGPRKAIKK) is disordered.

It belongs to the universal ribosomal protein uS13 family. Part of the 30S ribosomal subunit. Forms a loose heterodimer with protein S19. Forms two bridges to the 50S subunit in the 70S ribosome.

Functionally, located at the top of the head of the 30S subunit, it contacts several helices of the 16S rRNA. In the 70S ribosome it contacts the 23S rRNA (bridge B1a) and protein L5 of the 50S subunit (bridge B1b), connecting the 2 subunits; these bridges are implicated in subunit movement. Contacts the tRNAs in the A and P-sites. This is Small ribosomal subunit protein uS13 from Xylella fastidiosa (strain M12).